A 143-amino-acid polypeptide reads, in one-letter code: MKCGVFMEVYTQELPLRTSRRVELIDITSMVSGVLESSGIRNGILNVFSRHSTSAIFINENESRLLSDIESMLEGTVPVDASYGHNAIDNNADSHLRAVLLGGSQTVPVINGSMDLGTWQSIFFAELDGPRNRRIRVSVAGKP.

Belongs to the UPF0047 family.

In Methanothermobacter thermautotrophicus (strain ATCC 29096 / DSM 1053 / JCM 10044 / NBRC 100330 / Delta H) (Methanobacterium thermoautotrophicum), this protein is UPF0047 protein MTH_771.